The primary structure comprises 90 residues: MANKTFEELFTELQLKAAEGDPATSRTAELVDKGVHAIGKKVVEEAAEVWMAAEYEGKEAAAEEISQLLYHVQVMMVARGISLDDVYAHL.

This sequence belongs to the PRA-PH family.

It is found in the cytoplasm. It carries out the reaction 1-(5-phospho-beta-D-ribosyl)-ATP + H2O = 1-(5-phospho-beta-D-ribosyl)-5'-AMP + diphosphate + H(+). Its pathway is amino-acid biosynthesis; L-histidine biosynthesis; L-histidine from 5-phospho-alpha-D-ribose 1-diphosphate: step 2/9. This is Phosphoribosyl-ATP pyrophosphatase from Streptomyces griseus subsp. griseus (strain JCM 4626 / CBS 651.72 / NBRC 13350 / KCC S-0626 / ISP 5235).